Consider the following 386-residue polypeptide: Methionine aminopeptidase 1 (386 aa).

A C6H2-type zinc finger spans residues Thr-6–Lys-59. The Zn(2+) site is built by Cys-9, Cys-14, Cys-22, Cys-25, Cys-36, Cys-40, His-48, and His-52. His-202 contacts a protein. Residues Asp-219, Asp-230, and His-293 each contribute to the Zn(2+) site. Residue His-300 participates in a protein binding. Zn(2+)-binding residues include Glu-326 and Glu-357.

Belongs to the peptidase M24A family. Methionine aminopeptidase type 1 subfamily. As to quaternary structure, associates with the 60S ribosomal subunit of the 80S translational complex. It depends on Zn(2+) as a cofactor. Requires Co(2+) as cofactor. Mn(2+) serves as cofactor. Fe(2+) is required as a cofactor.

The protein resides in the cytoplasm. The enzyme catalyses Release of N-terminal amino acids, preferentially methionine, from peptides and arylamides.. In terms of biological role, cotranslationally removes the N-terminal methionine from nascent proteins. The N-terminal methionine is often cleaved when the second residue in the primary sequence is small and uncharged (Met-Ala-, Cys, Gly, Pro, Ser, Thr, or Val). In Danio rerio (Zebrafish), this protein is Methionine aminopeptidase 1 (metap1).